Consider the following 296-residue polypeptide: Ethanolamine ammonia-lyase small subunit (296 aa).

Adenosylcob(III)alamin-binding residues include V209 and E230.

Belongs to the EutC family. The basic unit is a heterodimer which dimerizes to form tetramers. The heterotetramers trimerize; 6 large subunits form a core ring with 6 small subunits projecting outwards. Adenosylcob(III)alamin serves as cofactor.

It localises to the bacterial microcompartment. The enzyme catalyses ethanolamine = acetaldehyde + NH4(+). It functions in the pathway amine and polyamine degradation; ethanolamine degradation. Its function is as follows. Catalyzes the deamination of various vicinal amino-alcohols to oxo compounds. Allows this organism to utilize ethanolamine as the sole source of nitrogen and carbon in the presence of external vitamin B12. The polypeptide is Ethanolamine ammonia-lyase small subunit (Lachnoclostridium phytofermentans (strain ATCC 700394 / DSM 18823 / ISDg) (Clostridium phytofermentans)).